The chain runs to 422 residues: Multifunctional CCA protein (422 aa).

Gly-8 and Arg-11 together coordinate ATP. CTP contacts are provided by Gly-8 and Arg-11. Asp-21 and Asp-23 together coordinate Mg(2+). Arg-91, Arg-137, and Arg-140 together coordinate ATP. Arg-91, Arg-137, and Arg-140 together coordinate CTP. One can recognise an HD domain in the interval 228–329 (TGLHSLMALE…VKLLQSCDAW (102 aa)). A disordered region spans residues 403–422 (FKQDNAPEAQEKGGEDVGLT).

This sequence belongs to the tRNA nucleotidyltransferase/poly(A) polymerase family. Bacterial CCA-adding enzyme type 1 subfamily. Monomer. Can also form homodimers and oligomers. Mg(2+) serves as cofactor. It depends on Ni(2+) as a cofactor.

It carries out the reaction a tRNA precursor + 2 CTP + ATP = a tRNA with a 3' CCA end + 3 diphosphate. The enzyme catalyses a tRNA with a 3' CCA end + 2 CTP + ATP = a tRNA with a 3' CCACCA end + 3 diphosphate. Catalyzes the addition and repair of the essential 3'-terminal CCA sequence in tRNAs without using a nucleic acid template. Adds these three nucleotides in the order of C, C, and A to the tRNA nucleotide-73, using CTP and ATP as substrates and producing inorganic pyrophosphate. tRNA 3'-terminal CCA addition is required both for tRNA processing and repair. Also involved in tRNA surveillance by mediating tandem CCA addition to generate a CCACCA at the 3' terminus of unstable tRNAs. While stable tRNAs receive only 3'-terminal CCA, unstable tRNAs are marked with CCACCA and rapidly degraded. The sequence is that of Multifunctional CCA protein from Hahella chejuensis (strain KCTC 2396).